Here is an 834-residue protein sequence, read N- to C-terminus: ABC transporter A family member 11 (834 aa).

The next 7 helical transmembrane spans lie at 35 to 55, 188 to 208, 235 to 255, 269 to 289, 297 to 319, 324 to 346, and 355 to 375; these read FFIL…ILNN, MPMI…ILIV, VFDY…LYSF, FLLF…LQFI, NKWL…SVAF, PLIV…LKAL, and SYTI…IYFI. An ABC transporter domain is found at 452–693; the sequence is LDKPSIIERC…YGSGYTIDII (242 aa). 495-502 provides a ligand contact to ATP; sequence GPNGSGKS. Positions 779–789 are enriched in polar residues; it reads KQQTNNKSNII. Residues 779–834 form a disordered region; sequence KQQTNNKSNIINNNNNNNNNNNNNNNNNNNNNNNNNNNNNNNNNTNNNTNNNQLIN. Residues 790–834 are compositionally biased toward low complexity; that stretch reads NNNNNNNNNNNNNNNNNNNNNNNNNNNNNNNNNTNNNTNNNQLIN.

Belongs to the ABC transporter superfamily. ABCA family.

It is found in the membrane. This is ABC transporter A family member 11 (abcA11) from Dictyostelium discoideum (Social amoeba).